The primary structure comprises 248 residues: Ribonuclease PH (248 aa).

Phosphate is bound by residues arginine 86 and 124-126; that span reads GTR.

This sequence belongs to the RNase PH family. In terms of assembly, homohexameric ring arranged as a trimer of dimers.

It carries out the reaction tRNA(n+1) + phosphate = tRNA(n) + a ribonucleoside 5'-diphosphate. In terms of biological role, phosphorolytic 3'-5' exoribonuclease that plays an important role in tRNA 3'-end maturation. Removes nucleotide residues following the 3'-CCA terminus of tRNAs; can also add nucleotides to the ends of RNA molecules by using nucleoside diphosphates as substrates, but this may not be physiologically important. Probably plays a role in initiation of 16S rRNA degradation (leading to ribosome degradation) during starvation. The sequence is that of Ribonuclease PH from Clostridium perfringens (strain ATCC 13124 / DSM 756 / JCM 1290 / NCIMB 6125 / NCTC 8237 / Type A).